We begin with the raw amino-acid sequence, 510 residues long: Lysine--tRNA ligase (510 aa).

Residues Glu420 and Glu427 each coordinate Mg(2+).

It belongs to the class-II aminoacyl-tRNA synthetase family. In terms of assembly, homodimer. It depends on Mg(2+) as a cofactor.

It localises to the cytoplasm. The enzyme catalyses tRNA(Lys) + L-lysine + ATP = L-lysyl-tRNA(Lys) + AMP + diphosphate. This chain is Lysine--tRNA ligase (lysS), found in Vibrio cholerae serotype O1 (strain ATCC 39315 / El Tor Inaba N16961).